A 208-amino-acid polypeptide reads, in one-letter code: MLSIILKESVRNLGKAGVVTKVKPGYARYLLTQKKAVRATKENLKNLEEQYLVIERENLEKLEAAKALKLSLEDEFLIITRQAADDGKLFGSVTPKCISKLLSDKGYNIHYRNIFFYSVIKYIGEYVVNLELHPDLVLPITLYVVKNDLGAMQAQKLHAEKKRKIEKEVEEGSGTSVDESLKLDSVSDSIDTSGVNSSDKEEENNIIE.

Residues 161 to 208 form a disordered region; it reads KKRKIEKEVEEGSGTSVDESLKLDSVSDSIDTSGVNSSDKEEENNIIE. Positions 186–197 are enriched in polar residues; sequence VSDSIDTSGVNS.

Belongs to the bacterial ribosomal protein bL9 family.

In terms of biological role, binds to the 23S rRNA. The polypeptide is Large ribosomal subunit protein bL9 (Ehrlichia canis (strain Jake)).